The primary structure comprises 171 residues: Iron-sulfur cluster assembly protein 1 (171 aa).

Residues 1–55 constitute a mitochondrion transit peptide; sequence MLRAGGRRLLAPGLRRVLGGGAAAPVAVGGAKAYHERVVDHYENPRNVGSFENDD.

Belongs to the NifU family. As to quaternary structure, component of the core Fe-S cluster (ISC) assembly machinery. The cofactor is [2Fe-2S] cluster.

The protein resides in the mitochondrion matrix. The protein operates within cofactor biosynthesis; iron-sulfur cluster biosynthesis. Scaffold protein for the de novo synthesis of iron-sulfur (Fe-S) clusters within mitochondria, which is required for maturation of both mitochondrial and cytoplasmic [2Fe-2S] and [4Fe-4S] proteins. First, a [2Fe-2S] cluster is transiently assembled on the scaffold protein ISCU (ISU1, ISU2 or ISU3). In a second step, the cluster is released from ISCU, transferred to a glutaredoxin, followed by the formation of mitochondrial [2Fe-2S] proteins, the synthesis of [4Fe-4S] clusters and their target-specific insertion into the recipient apoproteins. Cluster assembly on ISCU depends on the function of the cysteine desulfurase complex NFS1-ISD11, which serves as the sulfur donor for cluster synthesis, the iron-binding protein frataxin as the putative iron donor, and the electron transfer chain comprised of ferredoxin reductase and ferredoxin, which receive their electrons from NADH. The sequence is that of Iron-sulfur cluster assembly protein 1 from Oryza sativa subsp. japonica (Rice).